Consider the following 753-residue polypeptide: 5-methyltetrahydropteroyltriglutamate--homocysteine methyltransferase (753 aa).

Residues 17 to 20 (RELK) and lysine 117 each bind 5-methyltetrahydropteroyltri-L-glutamate. Residues 431–433 (IGS) and glutamate 484 each bind L-homocysteine. L-methionine contacts are provided by residues 431-433 (IGS) and glutamate 484. Residues 515–516 (RC) and tryptophan 561 contribute to the 5-methyltetrahydropteroyltri-L-glutamate site. Aspartate 599 lines the L-homocysteine pocket. Residue aspartate 599 coordinates L-methionine. Residue glutamate 605 participates in 5-methyltetrahydropteroyltri-L-glutamate binding. Zn(2+)-binding residues include histidine 641, cysteine 643, and glutamate 665. Residue histidine 694 is the Proton donor of the active site. Residue cysteine 726 coordinates Zn(2+).

The protein belongs to the vitamin-B12 independent methionine synthase family. Zn(2+) serves as cofactor.

It carries out the reaction 5-methyltetrahydropteroyltri-L-glutamate + L-homocysteine = tetrahydropteroyltri-L-glutamate + L-methionine. The protein operates within amino-acid biosynthesis; L-methionine biosynthesis via de novo pathway; L-methionine from L-homocysteine (MetE route): step 1/1. In terms of biological role, catalyzes the transfer of a methyl group from 5-methyltetrahydrofolate to homocysteine resulting in methionine formation. The polypeptide is 5-methyltetrahydropteroyltriglutamate--homocysteine methyltransferase (Escherichia coli O7:K1 (strain IAI39 / ExPEC)).